Here is a 150-residue protein sequence, read N- to C-terminus: D-aminoacyl-tRNA deacylase (150 aa).

A Gly-cisPro motif, important for rejection of L-amino acids motif is present at residues 136-137; sequence GP.

The protein belongs to the DTD family. Homodimer.

Its subcellular location is the cytoplasm. The enzyme catalyses glycyl-tRNA(Ala) + H2O = tRNA(Ala) + glycine + H(+). The catalysed reaction is a D-aminoacyl-tRNA + H2O = a tRNA + a D-alpha-amino acid + H(+). An aminoacyl-tRNA editing enzyme that deacylates mischarged D-aminoacyl-tRNAs. Also deacylates mischarged glycyl-tRNA(Ala), protecting cells against glycine mischarging by AlaRS. Acts via tRNA-based rather than protein-based catalysis; rejects L-amino acids rather than detecting D-amino acids in the active site. By recycling D-aminoacyl-tRNA to D-amino acids and free tRNA molecules, this enzyme counteracts the toxicity associated with the formation of D-aminoacyl-tRNA entities in vivo and helps enforce protein L-homochirality. The polypeptide is D-aminoacyl-tRNA deacylase (Staphylococcus haemolyticus (strain JCSC1435)).